A 557-amino-acid polypeptide reads, in one-letter code: Formate--tetrahydrofolate ligase (557 aa).

65–72 (TPAGEGKT) contributes to the ATP binding site.

It belongs to the formate--tetrahydrofolate ligase family.

It catalyses the reaction (6S)-5,6,7,8-tetrahydrofolate + formate + ATP = (6R)-10-formyltetrahydrofolate + ADP + phosphate. The protein operates within one-carbon metabolism; tetrahydrofolate interconversion. The chain is Formate--tetrahydrofolate ligase from Methylorubrum extorquens (strain CM4 / NCIMB 13688) (Methylobacterium extorquens).